The primary structure comprises 122 residues: UPF0738 protein YjbL (122 aa).

The protein belongs to the UPF0738 family.

In Bacillus subtilis (strain 168), this protein is UPF0738 protein YjbL (yjbL).